A 716-amino-acid polypeptide reads, in one-letter code: Fatty acid oxidation complex subunit alpha (716 aa).

The segment at 1 to 189 is enoyl-CoA hydratase/isomerase; it reads MIYQSPTIQV…KVGAIDAVVA (189 aa). Asp-296 lines the substrate pocket. A 3-hydroxyacyl-CoA dehydrogenase region spans residues 311–716; sequence QAVNSAAVLG…AATNGSYYPA (406 aa). NAD(+) contacts are provided by residues Met-324, Asp-343, 400–402, Lys-407, and Ser-429; that span reads VVE. The For 3-hydroxyacyl-CoA dehydrogenase activity role is filled by His-450. Residue Asn-453 coordinates NAD(+). Substrate is bound by residues Asn-500 and Tyr-660.

In the N-terminal section; belongs to the enoyl-CoA hydratase/isomerase family. The protein in the C-terminal section; belongs to the 3-hydroxyacyl-CoA dehydrogenase family. In terms of assembly, heterotetramer of two alpha chains (FadB) and two beta chains (FadA).

It carries out the reaction a (3S)-3-hydroxyacyl-CoA + NAD(+) = a 3-oxoacyl-CoA + NADH + H(+). The enzyme catalyses a (3S)-3-hydroxyacyl-CoA = a (2E)-enoyl-CoA + H2O. The catalysed reaction is a 4-saturated-(3S)-3-hydroxyacyl-CoA = a (3E)-enoyl-CoA + H2O. It catalyses the reaction (3S)-3-hydroxybutanoyl-CoA = (3R)-3-hydroxybutanoyl-CoA. It carries out the reaction a (3Z)-enoyl-CoA = a 4-saturated (2E)-enoyl-CoA. The enzyme catalyses a (3E)-enoyl-CoA = a 4-saturated (2E)-enoyl-CoA. Its pathway is lipid metabolism; fatty acid beta-oxidation. In terms of biological role, involved in the aerobic and anaerobic degradation of long-chain fatty acids via beta-oxidation cycle. Catalyzes the formation of 3-oxoacyl-CoA from enoyl-CoA via L-3-hydroxyacyl-CoA. It can also use D-3-hydroxyacyl-CoA and cis-3-enoyl-CoA as substrate. This is Fatty acid oxidation complex subunit alpha from Shewanella loihica (strain ATCC BAA-1088 / PV-4).